The sequence spans 607 residues: Arginine--tRNA ligase (607 aa).

The 'HIGH' region motif lies at 147–157 (PNIAKEMHVGH).

This sequence belongs to the class-I aminoacyl-tRNA synthetase family. In terms of assembly, monomer.

The protein localises to the cytoplasm. The catalysed reaction is tRNA(Arg) + L-arginine + ATP = L-arginyl-tRNA(Arg) + AMP + diphosphate. This Prochlorococcus marinus (strain NATL1A) protein is Arginine--tRNA ligase.